Here is a 387-residue protein sequence, read N- to C-terminus: Methionine aminopeptidase 1 (387 aa).

Ser2 is modified (N-acetylserine). The propeptide occupies 2–10 (STATTTVTT). The segment at 19 to 73 (KIYCSGLQCGRETSSQMKCPVCLKQGIVSIFCDTSCYENNYKAHKALHNAKDGLE) adopts a C6H2-type zinc-finger fold. Cys22, Cys27, Cys37, Cys40, Cys50, Cys54, His62, and His66 together coordinate Zn(2+). His202 contacts a protein. Residues Asp219, Asp230, and His294 each coordinate Zn(2+). His301 serves as a coordination point for a protein. Residues Glu327 and Glu358 each contribute to the Zn(2+) site.

It belongs to the peptidase M24A family. Methionine aminopeptidase type 1 subfamily. As to quaternary structure, associates with the 60S ribosomal subunit of the 80S translational complex. Requires Zn(2+) as cofactor. Co(2+) serves as cofactor. The cofactor is Mn(2+). Fe(2+) is required as a cofactor.

The protein resides in the cytoplasm. The catalysed reaction is Release of N-terminal amino acids, preferentially methionine, from peptides and arylamides.. In contract to the MetAP 2 isoform, is not inhibited by the fungal metabolite fumagillin, an antiangiogenic drug. In terms of biological role, cotranslationally removes the N-terminal methionine from nascent proteins. The N-terminal methionine is often cleaved when the second residue in the primary sequence is small and uncharged (Met-Ala-, Cys, Gly, Pro, Ser, Thr, or Val). Plays the major role in N-terminal methionine removal. Less efficient when the second residue is Val. The polypeptide is Methionine aminopeptidase 1 (MAP1) (Saccharomyces cerevisiae (strain ATCC 204508 / S288c) (Baker's yeast)).